A 115-amino-acid chain; its full sequence is Large ribosomal subunit protein bL19 (115 aa).

This sequence belongs to the bacterial ribosomal protein bL19 family.

This protein is located at the 30S-50S ribosomal subunit interface and may play a role in the structure and function of the aminoacyl-tRNA binding site. This is Large ribosomal subunit protein bL19 from Nitratidesulfovibrio vulgaris (strain DSM 19637 / Miyazaki F) (Desulfovibrio vulgaris).